Here is a 439-residue protein sequence, read N- to C-terminus: Cysteine--tRNA ligase (439 aa).

A Zn(2+)-binding site is contributed by cysteine 28. Residues 30 to 40 (ITVYDLCHIGH) carry the 'HIGH' region motif. Cysteine 209, histidine 234, and glutamate 238 together coordinate Zn(2+). The 'KMSKS' region signature appears at 266-270 (KMSKS). Lysine 269 serves as a coordination point for ATP.

This sequence belongs to the class-I aminoacyl-tRNA synthetase family. As to quaternary structure, monomer. Zn(2+) serves as cofactor.

Its subcellular location is the cytoplasm. The enzyme catalyses tRNA(Cys) + L-cysteine + ATP = L-cysteinyl-tRNA(Cys) + AMP + diphosphate. This Shigella boydii serotype 4 (strain Sb227) protein is Cysteine--tRNA ligase.